Reading from the N-terminus, the 491-residue chain is Trigger factor (491 aa).

The region spanning 169–254 is the PPIase FKBP-type domain; sequence GDRVTIDYLG…VKDVAAAAPI (86 aa). Positions 434–491 are disordered; that stretch reads KVSKEELTAEDDADEKPAKKTASKKKAAAKADAAEGEEAAAPKRKAPAKKKASDESAE. Residues 452–461 are compositionally biased toward basic residues; the sequence is KKTASKKKAA.

The protein belongs to the FKBP-type PPIase family. Tig subfamily.

Its subcellular location is the cytoplasm. It carries out the reaction [protein]-peptidylproline (omega=180) = [protein]-peptidylproline (omega=0). Its function is as follows. Involved in protein export. Acts as a chaperone by maintaining the newly synthesized protein in an open conformation. Functions as a peptidyl-prolyl cis-trans isomerase. This is Trigger factor from Sinorhizobium medicae (strain WSM419) (Ensifer medicae).